The chain runs to 241 residues: Chlorophyll a-b binding protein 6, chloroplastic (241 aa).

A chloroplast-targeting transit peptide spans Met-1–Asn-35. Trp-48 contacts chlorophyll b. The chlorophyll a site is built by Phe-68, Glu-87, and His-90. Chlorophyll b is bound at residue Arg-92. A helical membrane pass occupies residues Trp-93–Val-113. Leu-129 lines the chlorophyll a pocket. The helical transmembrane segment at Pro-132–Val-152 threads the bilayer. Residues Val-133, Glu-153, and Arg-156 each coordinate chlorophyll b. Chlorophyll a contacts are provided by Lys-190, Glu-191, Asn-194, Arg-196, Gln-208, and His-224. A helical transmembrane segment spans residues Leu-197–Pro-217.

This sequence belongs to the light-harvesting chlorophyll a/b-binding (LHC) protein family. The LHC complex consists of chlorophyll a-b binding proteins. Red-emitting heterodimer with LHCA4. Interacts with LHCA5. The cofactor is Binds at least 14 chlorophylls (8 Chl-a and 6 Chl-b) and carotenoids such as lutein and neoxanthin.. Post-translationally, photoregulated by reversible phosphorylation of its threonine residues.

It is found in the plastid. Its subcellular location is the chloroplast thylakoid membrane. In terms of biological role, the light-harvesting complex (LHC) functions as a light receptor, it captures and delivers excitation energy to photosystems with which it is closely associated. The protein is Chlorophyll a-b binding protein 6, chloroplastic of Arabidopsis thaliana (Mouse-ear cress).